The primary structure comprises 280 residues: MSSADWMAWIGRTEQVEDDICLAQAIAAAATLEPPSGAPTADSPLPPLWHWFYFLPRAPQSQLSSDGHPQRGGFIPPIPYPRRMFAGARIRFHHPLRIGQPARREGVIRNITQKSGRSGPLAFVTVGYQIYQHEMLCIEEEQDIVYREPGAPVPAPTPVELPPVHDAITRTVVPDPRLLFRFSALTFNAHRIHYDRPYAQHEEGYPGLVVHGPLVAVLLMELARHHTSRPIVGFSFRSQAPLFDLAPFRLLARPNGDRIDLEAQGPDGATALSATVELGG.

It belongs to the HTD2 family. Homodimer.

It carries out the reaction (3S)-citramalyl-CoA = 3-methylfumaryl-CoA + H2O. Inhibited by 3-methylfumaryl-CoA concentrations above 0.3 mM. Its function is as follows. Involved in the glyoxylate assimilation cycle used to regenerate acetyl-CoA and produce pyruvate as universal precursor for biosynthesis. Catalyzes the hydration of 3-methylfumaryl-CoA (mesaconyl-C4-CoA) to (3S)-citramalyl-CoA. The chain is Mesaconyl-C(4)-CoA hydratase (meh) from Chloroflexus aurantiacus (strain ATCC 29366 / DSM 635 / J-10-fl).